We begin with the raw amino-acid sequence, 357 residues long: Protein NDRG2 (357 aa).

A disordered region spans residues 1-28; it reads MAELQEVQITEEKPLLPGQTPEAAKTHS. Ala2 carries the post-translational modification N-acetylalanine. The residue at position 20 (Thr20) is a Phosphothreonine. Phosphoserine occurs at positions 312 and 314. Residue Thr316 is modified to Phosphothreonine. Phosphoserine is present on Ser318. At Thr320 the chain carries Phosphothreonine. Residues 320–357 form a disordered region; it reads TSAASVDGNRSRSRTLSQSSESGTLSSGPPGHTMEVSC. A phosphoserine mark is found at Ser321, Ser324, and Ser330. Positions 333–347 are enriched in low complexity; that stretch reads RTLSQSSESGTLSSG. Thr334 carries the post-translational modification Phosphothreonine. Ser336, Ser338, Ser339, and Ser341 each carry phosphoserine. Thr343 bears the Phosphothreonine mark. The residue at position 356 (Ser356) is a Phosphoserine.

It belongs to the NDRG family. As to quaternary structure, interacts with CTNNB1.

It is found in the cytoplasm. The protein localises to the perinuclear region. Its subcellular location is the cell projection. It localises to the growth cone. Contributes to the regulation of the Wnt signaling pathway. Down-regulates CTNNB1-mediated transcriptional activation of target genes, such as CCND1, and may thereby act as tumor suppressor. May be involved in dendritic cell and neuron differentiation. In Pan troglodytes (Chimpanzee), this protein is Protein NDRG2 (NDRG2).